The sequence spans 376 residues: Endo-1,4-beta-xylanase A (376 aa).

The signal sequence occupies residues 1 to 18 (MHLASSLFLLATLPFGFA). One can recognise a GH10 domain in the interval 55 to 355 (QRERAGLEDK…HPAYYGVVEA (301 aa)). N-linked (GlcNAc...) asparagine glycosylation is present at Asn-100. Glu-170 functions as the Proton donor in the catalytic mechanism. Glu-277 functions as the Nucleophile in the catalytic mechanism. The N-linked (GlcNAc...) asparagine glycan is linked to Asn-358.

This sequence belongs to the glycosyl hydrolase 10 (cellulase F) family.

It localises to the secreted. It catalyses the reaction Endohydrolysis of (1-&gt;4)-beta-D-xylosidic linkages in xylans.. It participates in glycan degradation; xylan degradation. With respect to regulation, partial inhibition of activity is detected in the presence of Ag(+), Cu2(+) and SDS. Like most fungal xylanases, activity is completely inhibited by Hg(2+) since Hg(2+) could interact with tryptophan residues and oxidize the indole ring. Beta-mercaptoethanol enhances the enzymatic activity by counteracting the oxidation effects of the S-S linkage between cysteine residues. Its function is as follows. Endo-1,4-beta-xylanase involved in the hydrolysis of xylan, a major structural heterogeneous polysaccharide found in plant biomass representing the second most abundant polysaccharide in the biosphere, after cellulose. Is most active on birchwood xylan (defined as 100%), moderate on beechwood xylan (96.8%) and soluble wheat arabinoxylan (84.5%), and weak on insoluble wheat arabinoxylan (19.7%). Hydrolyzes substrates into a mixture of xylobiose and xylotriose, but no xylose. No activity was detected in the presence of barley beta-glucan, carboxymethyl cellulose-sodium (CMC-Na), and Avicel. Acts as an alkali-tolerant xylanase, exhibiting 68.8% of the activity at pH 9.0, and even 31.8% at pH 10.0. The polypeptide is Endo-1,4-beta-xylanase A (Humicola insolens (Soft-rot fungus)).